The sequence spans 99 residues: Small ribosomal subunit protein eS24 (99 aa).

It belongs to the eukaryotic ribosomal protein eS24 family.

The sequence is that of Small ribosomal subunit protein eS24 from Methanothrix thermoacetophila (strain DSM 6194 / JCM 14653 / NBRC 101360 / PT) (Methanosaeta thermophila).